Consider the following 1318-residue polypeptide: DNA-directed RNA polymerase subunit beta' (1318 aa).

Residues Cys-60, Cys-62, Cys-75, and Cys-78 each coordinate Zn(2+). 3 residues coordinate Mg(2+): Asp-535, Asp-537, and Asp-539. Residues Cys-890, Cys-967, Cys-974, and Cys-977 each contribute to the Zn(2+) site.

The protein belongs to the RNA polymerase beta' chain family. In terms of assembly, the RNAP catalytic core consists of 2 alpha, 1 beta, 1 beta' and 1 omega subunit. When a sigma factor is associated with the core the holoenzyme is formed, which can initiate transcription. Requires Mg(2+) as cofactor. It depends on Zn(2+) as a cofactor.

It carries out the reaction RNA(n) + a ribonucleoside 5'-triphosphate = RNA(n+1) + diphosphate. Functionally, DNA-dependent RNA polymerase catalyzes the transcription of DNA into RNA using the four ribonucleoside triphosphates as substrates. This Rhodococcus erythropolis (strain PR4 / NBRC 100887) protein is DNA-directed RNA polymerase subunit beta'.